We begin with the raw amino-acid sequence, 289 residues long: NAD kinase (289 aa).

The active-site Proton acceptor is the D82. NAD(+) is bound by residues 82–83 (DG), R87, 150–151 (NE), K161, R178, D180, 191–196 (TAYAMS), A215, and Q250.

The protein belongs to the NAD kinase family. Requires a divalent metal cation as cofactor.

It localises to the cytoplasm. It catalyses the reaction NAD(+) + ATP = ADP + NADP(+) + H(+). Functionally, involved in the regulation of the intracellular balance of NAD and NADP, and is a key enzyme in the biosynthesis of NADP. Catalyzes specifically the phosphorylation on 2'-hydroxyl of the adenosine moiety of NAD to yield NADP. This Methanosarcina mazei (strain ATCC BAA-159 / DSM 3647 / Goe1 / Go1 / JCM 11833 / OCM 88) (Methanosarcina frisia) protein is NAD kinase.